Reading from the N-terminus, the 263-residue chain is ATP synthase subunit a (263 aa).

The next 6 helical transmembrane spans lie at 26–46, 86–106, 130–150, 166–186, 195–215, and 229–249; these read VHLD…FFFS, VAPL…IDLI, DISA…FYTI, PFNH…TLLA, LFGN…MYMA, and LAWA…FMML.

The protein belongs to the ATPase A chain family. In terms of assembly, F-type ATPases have 2 components, CF(1) - the catalytic core - and CF(0) - the membrane proton channel. CF(1) has five subunits: alpha(3), beta(3), gamma(1), delta(1), epsilon(1). CF(0) has three main subunits: a(1), b(2) and c(9-12). The alpha and beta chains form an alternating ring which encloses part of the gamma chain. CF(1) is attached to CF(0) by a central stalk formed by the gamma and epsilon chains, while a peripheral stalk is formed by the delta and b chains.

It is found in the cell inner membrane. Key component of the proton channel; it plays a direct role in the translocation of protons across the membrane. This Glaesserella parasuis serovar 5 (strain SH0165) (Haemophilus parasuis) protein is ATP synthase subunit a.